A 499-amino-acid polypeptide reads, in one-letter code: Putative sperm motility kinase W (499 aa).

A Protein kinase domain is found at 14 to 262 (YKVLFTLGHG…IEDIERHPWV (249 aa)). Residues 20 to 28 (LGHGSFGTV) and Lys-43 each bind ATP. Catalysis depends on Asp-133, which acts as the Proton acceptor. In terms of domain architecture, UBA spans 274-314 (DPDYNIIEMLCGMGFDANEILESLQRKKYNESMGAYLILKA).

Belongs to the protein kinase superfamily. CAMK Ser/Thr protein kinase family. Smok subfamily.

It carries out the reaction L-seryl-[protein] + ATP = O-phospho-L-seryl-[protein] + ADP + H(+). The catalysed reaction is L-threonyl-[protein] + ATP = O-phospho-L-threonyl-[protein] + ADP + H(+). Its function is as follows. May play a role in sperm motility, especially in the regulation of flagellar function. The chain is Putative sperm motility kinase W from Mus musculus (Mouse).